A 113-amino-acid chain; its full sequence is U11-theraphotoxin-Hhn1r (113 aa).

Positions 1–21 are cleaved as a signal peptide; sequence MNTVRVTFLLVFVLAVSLGQA. Residues 22–74 constitute a propeptide that is removed on maturation; that stretch reads DKDENRMEMQEKTEQGKSYLDFAENLLLQKLEELEAKLLEEDSEESRNSRQKR. The disordered stretch occupies residues 61–83; it reads EEDSEESRNSRQKRCIGEGVPCD. Disulfide bonds link Cys-75–Cys-90, Cys-82–Cys-95, and Cys-89–Cys-110.

Belongs to the neurotoxin 14 (magi-1) family. 01 (HNTX-16) subfamily. Expressed by the venom gland.

The protein localises to the secreted. In terms of biological role, probable ion channel inhibitor. The protein is U11-theraphotoxin-Hhn1r of Cyriopagopus hainanus (Chinese bird spider).